The following is a 219-amino-acid chain: MRILLVEDDTLIGDGIKAGLSKMGFSVDWFTEGRPGKEALYSAPYDAVILDLTLPGMDGRDILREWREKGKQEPVLILTARDALAERVEGLRLGADDYLCKPFALIEVAARLEALVRRASGQASSELRHGQVTLNPGNLVATLAGEPLALKPKEFALLELLLRNKGRVLPRKLIEEKLYNWDDDVSSNAVEVHVHHLRRKLGSEFIRTVHGIGYTLGDA.

The region spanning R2–V116 is the Response regulatory domain. 4-aspartylphosphate is present on D51. The segment at residues S124–D218 is a DNA-binding region (ompR/PhoB-type).

In terms of processing, phosphorylated by QseC.

Its subcellular location is the cytoplasm. In terms of biological role, member of a two-component regulatory system QseB/QseC. Activates the flagella regulon by activating transcription of flhDC. The chain is Transcriptional regulatory protein QseB (qseB) from Salmonella typhimurium (strain LT2 / SGSC1412 / ATCC 700720).